Here is a 568-residue protein sequence, read N- to C-terminus: Protein yellow (568 aa).

A signal peptide spans 1 to 28 (MHAQDKGGILPALSLLLIAVAMVSPSQA). N-linked (GlcNAc...) asparagine glycosylation is found at N151 and N222.

Belongs to the major royal jelly protein family.

It is found in the secreted. Its function is as follows. Controls the pigmentation pattern of the adult cuticle and larval mouth parts. The sequence is that of Protein yellow (y) from Drosophila madeirensis (Fruit fly).